The sequence spans 164 residues: NADH-quinone oxidoreductase subunit I (164 aa).

4Fe-4S ferredoxin-type domains follow at residues 55–85 (LRRY…IDAE) and 95–124 (TRYD…EGPN). Cys-65, Cys-68, Cys-71, Cys-75, Cys-104, Cys-107, Cys-110, and Cys-114 together coordinate [4Fe-4S] cluster.

The protein belongs to the complex I 23 kDa subunit family. As to quaternary structure, NDH-1 is composed of 14 different subunits. Subunits NuoA, H, J, K, L, M, N constitute the membrane sector of the complex. Requires [4Fe-4S] cluster as cofactor.

Its subcellular location is the cell inner membrane. The catalysed reaction is a quinone + NADH + 5 H(+)(in) = a quinol + NAD(+) + 4 H(+)(out). Its function is as follows. NDH-1 shuttles electrons from NADH, via FMN and iron-sulfur (Fe-S) centers, to quinones in the respiratory chain. The immediate electron acceptor for the enzyme in this species is believed to be ubiquinone. Couples the redox reaction to proton translocation (for every two electrons transferred, four hydrogen ions are translocated across the cytoplasmic membrane), and thus conserves the redox energy in a proton gradient. The chain is NADH-quinone oxidoreductase subunit I from Roseobacter denitrificans (strain ATCC 33942 / OCh 114) (Erythrobacter sp. (strain OCh 114)).